Here is a 332-residue protein sequence, read N- to C-terminus: Large ribosomal subunit protein uL29m (332 aa).

The interval 19–40 is disordered; sequence RFTKPKPKPAKRENVRLPTQRT. Positions 264-327 form a coiled coil; sequence TSENTESAIA…IQLQEEDAKN (64 aa).

The protein belongs to the universal ribosomal protein uL29 family. In terms of assembly, component of the mitochondrial large ribosomal subunit. Mature mitochondrial ribosomes consist of a small (37S) and a large (54S) subunit. The 37S subunit contains at least 33 different proteins and 1 molecule of RNA (15S). The 54S subunit contains at least 45 different proteins and 1 molecule of RNA (21S).

It is found in the mitochondrion. The chain is Large ribosomal subunit protein uL29m (MRPL4) from Kluyveromyces lactis (strain ATCC 8585 / CBS 2359 / DSM 70799 / NBRC 1267 / NRRL Y-1140 / WM37) (Yeast).